The following is a 199-amino-acid chain: GTP cyclohydrolase-2 (199 aa).

49–53 (RIHSE) is a binding site for GTP. Zn(2+)-binding residues include Cys-54, Cys-65, and Cys-67. Residues Gln-70, 92 to 94 (EGR), and Thr-114 contribute to the GTP site. Catalysis depends on Asp-126, which acts as the Proton acceptor. Arg-128 (nucleophile) is an active-site residue. Residues Thr-149 and Lys-154 each coordinate GTP.

Belongs to the GTP cyclohydrolase II family. In terms of assembly, homodimer. Requires Zn(2+) as cofactor.

It carries out the reaction GTP + 4 H2O = 2,5-diamino-6-hydroxy-4-(5-phosphoribosylamino)-pyrimidine + formate + 2 phosphate + 3 H(+). It participates in cofactor biosynthesis; riboflavin biosynthesis; 5-amino-6-(D-ribitylamino)uracil from GTP: step 1/4. In terms of biological role, catalyzes the conversion of GTP to 2,5-diamino-6-ribosylamino-4(3H)-pyrimidinone 5'-phosphate (DARP), formate and pyrophosphate. This Proteus mirabilis (strain HI4320) protein is GTP cyclohydrolase-2.